The following is a 432-amino-acid chain: Aspartate aminotransferase (432 aa).

Position 45–46 (Arg-45–Gly-46) interacts with substrate. Pyridoxal 5'-phosphate is bound at residue Ser-109–Leu-111. Tyr-148–Arg-150 is a binding site for substrate. Pyridoxal 5'-phosphate contacts are provided by residues Asn-197, Tyr-229, and Ser-262 to Lys-265. Arg-400 contacts substrate.

It belongs to the class-I pyridoxal-phosphate-dependent aminotransferase family. As to quaternary structure, homodimer. Pyridoxal 5'-phosphate is required as a cofactor.

It carries out the reaction L-aspartate + 2-oxoglutarate = oxaloacetate + L-glutamate. This chain is Aspartate aminotransferase, found in Corynebacterium glutamicum (strain ATCC 13032 / DSM 20300 / JCM 1318 / BCRC 11384 / CCUG 27702 / LMG 3730 / NBRC 12168 / NCIMB 10025 / NRRL B-2784 / 534).